An 819-amino-acid chain; its full sequence is MRYDPGLIEEKWQKFWKNEQVFKAEEDETKTKYYVLDMFPYPSGAGLHVGHLIGYTATDIVARCKRAQGFSVLHPMGWDSFGLPAEQYAIRTGTHPRETTEKNIANFKKQLTAMGFSYDESREFATSDPEYYKWTQKLFLILYEKGLAYMADMAVNYCPELGTVLSNEEIENGFSVDGGYPVERRMLRQWVLRITAFADQLLEGLDELDWPESVKQLQKNWIGKSSGASVNFATEHGAIEVFTTRPDTLIGVSFLALAPEHPLVDLLTSDEQKAVVAQYIKETQSKSERDRISEMKTKSGVFTGSYAKHPVTHELIPIWIADYVLMGFGSGAVMGVPAHDERDLLFAEQFNLPVVSVLNEEGVCINSCCEGFHLDGLSGEEAKQYVINFLEENHLGAAKIAYKLRDWLFSRQRYWGEPIPIIHFEDGSCRPLRDDELPLLPPEIQDYRPEGVGQGPLAKVREWVQVFDTETQRAGKRETHTMPQWAGSCWYYLRFCDAHNSAAPWAKEKEQYWMPVDLYIGGAEHAVLHLLYARFWHQVFYEAGIVSTPEPFKKLVNQGLVLATSYRIPGKGYIYPETAKEENGKWVAPSGEELDVRQEKMSKSKLNGVDPQILIDEFGADAVRMYAMFSGPLDKNKLWSNQGVAGCRRFLNRFYEMVSSDRVKEDNNFEGLSLAHKLVQRVTDAIEKLSLNTIPSSFMEFINDFVKLAVYPKSAVEMAVRALAPIAPHISEELWVLLGNSPGVQKSGWPSVLPEYLEEQTVTIVVQVNGKLRARLDIMKDASKEEVLALARESASKYLEGCEVKKAIFVPARLVNFVV.

A 'HIGH' region motif is present at residues 40-51 (PYPSGAGLHVGH). A 'KMSKS' region motif is present at residues 600-604 (KMSKS). Residue K603 participates in ATP binding.

It belongs to the class-I aminoacyl-tRNA synthetase family.

Its subcellular location is the cytoplasm. The enzyme catalyses tRNA(Leu) + L-leucine + ATP = L-leucyl-tRNA(Leu) + AMP + diphosphate. This Chlamydia trachomatis serovar L2 (strain ATCC VR-902B / DSM 19102 / 434/Bu) protein is Leucine--tRNA ligase.